The sequence spans 503 residues: MAIKAEEISALLKSQIENYESGMTVTDVGTVIQVGDGIALVHGLNNVMAGELVEFHNGVLGLAQNLEENNVGVVILGPFTDIKEGDEVKRTGRIMEVPVGEELIGRVVNPLGQPIDGRGPLNTTKTRPIESPATGVMDRKSVDEPLQTGIKAIDALVPIGRGQRELIIGDRQTGKTTVAIDTILNQKDEDMICVYVAIGQKESTVRTAVETLRAHGALDYTIVVSASASQPAPLLYIAPYAGVAMAEEFMFNGKHVLIVYDDLTKQAAAYRELSLLLRRPPGREAYPGDVFYLHSRLLERAAKLNDSLGGGSITALPFVETQAGDISAYVPTNVISITDGQIFLQSDLFFSGVRPAINAGLSVSRVGGSAQIKAMKKVAGTLRLDLASYRELESFAQFGSDLDPATKAKLERGKRTVEVLKQDQNKPLTVDKQVTILYALTKGHLDDIPVQDITRFEDEFLGWVGSNAPHIYQEIRETKGLPADEVFVEAINAFKKIFNKSEV.

Residue 169–176 participates in ATP binding; the sequence is GDRQTGKT.

This sequence belongs to the ATPase alpha/beta chains family. As to quaternary structure, F-type ATPases have 2 components, CF(1) - the catalytic core - and CF(0) - the membrane proton channel. CF(1) has five subunits: alpha(3), beta(3), gamma(1), delta(1), epsilon(1). CF(0) has three main subunits: a(1), b(2) and c(9-12). The alpha and beta chains form an alternating ring which encloses part of the gamma chain. CF(1) is attached to CF(0) by a central stalk formed by the gamma and epsilon chains, while a peripheral stalk is formed by the delta and b chains.

It localises to the cell membrane. It catalyses the reaction ATP + H2O + 4 H(+)(in) = ADP + phosphate + 5 H(+)(out). Its function is as follows. Produces ATP from ADP in the presence of a proton gradient across the membrane. The alpha chain is a regulatory subunit. This Macrococcus caseolyticus (strain JCSC5402) (Macrococcoides caseolyticum) protein is ATP synthase subunit alpha.